The chain runs to 87 residues: Cell division topological specificity factor (87 aa).

The protein belongs to the MinE family.

In terms of biological role, prevents the cell division inhibition by proteins MinC and MinD at internal division sites while permitting inhibition at polar sites. This ensures cell division at the proper site by restricting the formation of a division septum at the midpoint of the long axis of the cell. The polypeptide is Cell division topological specificity factor (Herpetosiphon aurantiacus (strain ATCC 23779 / DSM 785 / 114-95)).